The sequence spans 107 residues: Cytochrome c2 (107 aa).

Gln-1 carries the pyrrolidone carboxylic acid modification. Positions 13, 16, 17, and 79 each coordinate heme c.

The protein belongs to the cytochrome c family. Post-translationally, binds 1 heme c group covalently per subunit.

The protein resides in the periplasm. In terms of biological role, cytochrome c2 is found mainly in purple, non-sulfur, photosynthetic bacteria where it functions as the electron donor to the oxidized bacteriochlorophyll in the photophosphorylation pathway. However, it may also have a role in the respiratory chain and is found in some non-photosynthetic bacteria. This Rhodoplanes tepidamans (Rhodoplanes cryptolactis) protein is Cytochrome c2.